The following is a 70-amino-acid chain: MVKVKSKNSVIKLLSTAASGYSRYISIKKGAPLVTQVRYDPVVKRHVLFKEAKKRKVAERKPLDFLRTAK.

Belongs to the bacterial ribosomal protein bL33 family. In terms of assembly, component of the mitochondrial large ribosomal subunit (mt-LSU). Mature yeast 74S mitochondrial ribosomes consist of a small (37S) and a large (54S) subunit. The 37S small subunit contains a 15S ribosomal RNA (15S mt-rRNA) and 34 different proteins. The 54S large subunit contains a 21S rRNA (21S mt-rRNA) and 46 different proteins. bL33m stabilizes the tRNA acceptor stem in the E-site.

The protein resides in the mitochondrion. In terms of biological role, component of the mitochondrial ribosome (mitoribosome), a dedicated translation machinery responsible for the synthesis of mitochondrial genome-encoded proteins, including at least some of the essential transmembrane subunits of the mitochondrial respiratory chain. The mitoribosomes are attached to the mitochondrial inner membrane and translation products are cotranslationally integrated into the membrane. This chain is Large ribosomal subunit protein bL33m (MRPL39), found in Saccharomyces cerevisiae (strain ATCC 204508 / S288c) (Baker's yeast).